A 359-amino-acid polypeptide reads, in one-letter code: Protein Wnt-9b (359 aa).

The first 23 residues, 1-23, serve as a signal peptide directing secretion; sequence MRPAPALALAALCLLVLPAAAAA. Intrachain disulfides connect C91-C102, C137-C145, C147-C164, C212-C226, C214-C221, C293-C318, C307-C313, C317-C357, C333-C348, C335-C345, and C340-C341. N101 carries an N-linked (GlcNAc...) asparagine glycan. S218 carries O-palmitoleoyl serine; by PORCN lipidation.

It belongs to the Wnt family. Forms a soluble 1:1 complex with AFM; this prevents oligomerization and is required for prolonged biological activity. The complex with AFM may represent the physiological form in body fluids. Component of the Wnt-Fzd-LRP5-LRP6 signaling complex that contains a WNT protein, a FZD protein and LRP5 or LRP6. Interacts directly in the complex with LRP6. Interacts with PKD1 (via extracellular domain). In terms of processing, palmitoleoylation is required for efficient binding to frizzled receptors. Depalmitoleoylation leads to Wnt signaling pathway inhibition.

It localises to the secreted. Its subcellular location is the extracellular space. The protein localises to the extracellular matrix. Ligand for members of the frizzled family of seven transmembrane receptors. Functions in the canonical Wnt/beta-catenin signaling pathway. Required for normal embryonic kidney development, and for normal development of the urogenital tract, including uterus and part of the oviduct and the upper vagina in females, and epididymis and vas deferens in males. Activates a signaling cascade in the metanephric mesenchyme that induces tubulogenesis. Acts upstream of WNT4 in the signaling pathways that mediate development of kidney tubules and the Muellerian ducts. Plays a role in cranofacial development and is required for normal fusion of the palate during embryonic development. This Mus musculus (Mouse) protein is Protein Wnt-9b (Wnt9b).